We begin with the raw amino-acid sequence, 449 residues long: MREIVHLQTGQCGNQVGSAFWQTISGEHGLDASGIYTGDSDLQLERMNVYFNEAGGNKYVPRAVLIDLEPGTMDALRSGPNGALYRPDNFIYGQSSAGNNWAKGHYTEGAELVDQVIDVVRREAESCDCLQGFQVTHSLGGGTGSGMGTLLISKIREEFPDRMMATFSVMPSPKVSDTVVEPYNATLSVHQLVEHSDETFCLDNDALYDICIRTLKLSSPSYGDLNHLVSAVMSGITVSLRFPGQLNSDLRKLAVNMVPFPRLHFFMVGFAPLTSRSSSSFRTISVPELTQQMFDSRNMMTAANYQNGRFLTCSTLFRGKVAMKEVEDQMRNMQNKYSSYFVEWIPNNVQTALCSMPPKGLKMAATFVGNSTSVQELFNRVSNQFTAMFRRKAFLHWYTGEGMDEMEFTEAESNMNDLMSEYQQYQEATVSDGEGAYDAEEGEAYEQEE.

GTP is bound by residues Gln11 and Glu69. Residue Glu69 coordinates Mg(2+). Position 137 is a methylhistidine (His137). GTP is bound by residues Ser138, Gly142, Thr143, Gly144, Asn204, and Asn226.

Belongs to the tubulin family. In terms of assembly, dimer of alpha and beta chains. A typical microtubule is a hollow water-filled tube with an outer diameter of 25 nm and an inner diameter of 15 nM. Alpha-beta heterodimers associate head-to-tail to form protofilaments running lengthwise along the microtubule wall with the beta-tubulin subunit facing the microtubule plus end conferring a structural polarity. Microtubules usually have 13 protofilaments but different protofilament numbers can be found in some organisms and specialized cells. The cofactor is Mg(2+).

It is found in the cytoplasm. The protein localises to the cytoskeleton. Tubulin is the major constituent of microtubules, a cylinder consisting of laterally associated linear protofilaments composed of alpha- and beta-tubulin heterodimers. Microtubules grow by the addition of GTP-tubulin dimers to the microtubule end, where a stabilizing cap forms. Below the cap, tubulin dimers are in GDP-bound state, owing to GTPase activity of alpha-tubulin. This Emericella nidulans (strain FGSC A4 / ATCC 38163 / CBS 112.46 / NRRL 194 / M139) (Aspergillus nidulans) protein is Tubulin beta-2 chain (tubC).